A 129-amino-acid chain; its full sequence is L-ectoine synthase (129 aa).

It belongs to the ectoine synthase family.

It catalyses the reaction (2S)-4-acetamido-2-aminobutanoate = L-ectoine + H2O. The protein operates within amine and polyamine biosynthesis; ectoine biosynthesis; L-ectoine from L-aspartate 4-semialdehyde: step 3/3. In terms of biological role, catalyzes the circularization of gamma-N-acetyl-alpha,gamma-diaminobutyric acid (ADABA) to ectoine (1,4,5,6-tetrahydro-2-methyl-4-pyrimidine carboxylic acid), which is an excellent osmoprotectant. In Mycobacterium sp. (strain KMS), this protein is L-ectoine synthase.